The chain runs to 39 residues: Contryphan-Cal2 (39 aa).

An N-terminal signal peptide occupies residues 1-20 (MTRTAVLLLTLLFLVAMAAS). Cysteines 29 and 35 form a disulfide.

As to expression, expressed by the venom duct.

Its subcellular location is the secreted. Its function is as follows. Probable neurotoxin. The chain is Contryphan-Cal2 from Californiconus californicus (California cone).